A 211-amino-acid polypeptide reads, in one-letter code: Secreted phosphoprotein 24 (211 aa).

Positions M1–G29 are cleaved as a signal peptide. Cystine bridges form between C92–C103 and C116–C134. The residue at position 96 (S96) is a Phosphoserine. Phosphoserine is present on residues S145, S146, S170, S173, and S182.

It belongs to the SPP2 family. Post-translationally, phosphorylation sites are present in the extracellular medium. As to expression, detected in liver and plasma.

It localises to the secreted. Functionally, could coordinate an aspect of bone turnover. The polypeptide is Secreted phosphoprotein 24 (SPP2) (Homo sapiens (Human)).